The sequence spans 278 residues: Manganese import system permease protein ScaB (278 aa).

A run of 8 helical transmembrane segments spans residues alanine 18–leucine 38, isoleucine 61–isoleucine 81, threonine 94–alanine 114, leucine 134–phenylalanine 154, valine 174–glutamine 194, valine 196–alanine 216, methionine 222–tyrosine 242, and valine 246–isoleucine 266.

The protein belongs to the ABC-3 integral membrane protein family. In terms of assembly, the complex is composed of two ATP-binding proteins (ScaC), two transmembrane proteins (ScaB) and a solute-binding protein (ScaA).

Its subcellular location is the cell membrane. In terms of biological role, part of the high-affinity ABC transporter complex ScaABC involved in manganese import. Probably responsible for the translocation of the substrate across the membrane. Essential for growth under Mn(2+)-limiting conditions. In Streptococcus gordonii, this protein is Manganese import system permease protein ScaB.